The sequence spans 191 residues: Prostaglandin-H2 D-isomerase (191 aa).

An N-terminal signal peptide occupies residues 1-24 (MAALHTLWMGLVLLGVLGVLQTRA). Q25 carries the pyrrolidone carboxylic acid modification. N51 is a glycosylation site (N-linked (GlcNAc...) asparagine). The active-site Nucleophile is C65. N78 is a glycosylation site (N-linked (GlcNAc...) asparagine). C89 and C186 form a disulfide bridge.

It belongs to the calycin superfamily. Lipocalin family. In terms of assembly, monomer. Post-translationally, N- and O-glycosylated. Both N-glycosylation recognition sites are almost quantitatively occupied by N-glycans of the biantennary complex type, with a considerable proportion of structures bearing a bisecting GlcNAc. N-glycan at Asn-78: dHex1Hex5HexNAc4. Agalacto structure as well as sialylated and nonsialylated oligosaccharides bearing alpha2-3- and/or alpha2-6-linked NeuNAc are present.

It localises to the rough endoplasmic reticulum. It is found in the nucleus membrane. The protein localises to the golgi apparatus. Its subcellular location is the cytoplasm. The protein resides in the perinuclear region. It localises to the secreted. It carries out the reaction prostaglandin H2 = prostaglandin D2. In terms of biological role, catalyzes the conversion of PGH2 to PGD2, a prostaglandin involved in smooth muscle contraction/relaxation and a potent inhibitor of platelet aggregation. Involved in a variety of CNS functions, such as sedation, NREM sleep and PGE2-induced allodynia, and may have an anti-apoptotic role in oligodendrocytes. Binds small non-substrate lipophilic molecules, including biliverdin, bilirubin, retinal, retinoic acid and thyroid hormone, and may act as a scavenger for harmful hydrophobic molecules and as a secretory retinoid and thyroid hormone transporter. Possibly involved in development and maintenance of the blood-brain, blood-retina, blood-aqueous humor and blood-testis barrier. It is likely to play important roles in both maturation and maintenance of the central nervous system and male reproductive system. Involved in PLA2G3-dependent maturation of mast cells. PLA2G3 is secreted by immature mast cells and acts on nearby fibroblasts upstream to PTDGS to synthesize PGD2, which in turn promotes mast cell maturation and degranulation via PTGDR. In Felis catus (Cat), this protein is Prostaglandin-H2 D-isomerase (PTGDS).